Consider the following 367-residue polypeptide: UDP-N-acetylenolpyruvoylglucosamine reductase (367 aa).

Residues 29–205 (VGPVAQRVIT…LEVEFKLDAS (177 aa)) form the FAD-binding PCMH-type domain. The active site involves arginine 177. The Proton donor role is filled by serine 260. The active site involves glutamate 359.

It belongs to the MurB family. It depends on FAD as a cofactor.

The protein localises to the cytoplasm. It catalyses the reaction UDP-N-acetyl-alpha-D-muramate + NADP(+) = UDP-N-acetyl-3-O-(1-carboxyvinyl)-alpha-D-glucosamine + NADPH + H(+). It participates in cell wall biogenesis; peptidoglycan biosynthesis. Functionally, cell wall formation. This chain is UDP-N-acetylenolpyruvoylglucosamine reductase, found in Mycobacterium leprae (strain Br4923).